The primary structure comprises 299 residues: Probable lipid kinase YegS (299 aa).

The DAGKc domain occupies 2–133 (AEFPASLLIL…IDMAQVNKQT (132 aa)). Residues Thr40, 66-72 (GDGTINE), and Thr95 each bind ATP. Mg(2+) contacts are provided by Leu215, Asp218, and Leu220. Residue Glu271 is the Proton acceptor of the active site.

This sequence belongs to the diacylglycerol/lipid kinase family. YegS lipid kinase subfamily. Mg(2+) is required as a cofactor. It depends on Ca(2+) as a cofactor.

It localises to the cytoplasm. Its function is as follows. Probably phosphorylates lipids; the in vivo substrate is unknown. The sequence is that of Probable lipid kinase YegS from Escherichia coli O6:K15:H31 (strain 536 / UPEC).